A 40-amino-acid polypeptide reads, in one-letter code: Photosystem II reaction center protein J (40 aa).

A helical membrane pass occupies residues 8-28 (IPLWLIGTVTGIPVIGLIGIF).

The protein belongs to the PsbJ family. PSII is composed of 1 copy each of membrane proteins PsbA, PsbB, PsbC, PsbD, PsbE, PsbF, PsbH, PsbI, PsbJ, PsbK, PsbL, PsbM, PsbT, PsbX, PsbY, PsbZ, Psb30/Ycf12, at least 3 peripheral proteins of the oxygen-evolving complex and a large number of cofactors. It forms dimeric complexes.

The protein resides in the plastid. The protein localises to the chloroplast thylakoid membrane. In terms of biological role, one of the components of the core complex of photosystem II (PSII). PSII is a light-driven water:plastoquinone oxidoreductase that uses light energy to abstract electrons from H(2)O, generating O(2) and a proton gradient subsequently used for ATP formation. It consists of a core antenna complex that captures photons, and an electron transfer chain that converts photonic excitation into a charge separation. The chain is Photosystem II reaction center protein J from Vitis vinifera (Grape).